Reading from the N-terminus, the 1372-residue chain is MGQLTKKFGKIDVSLPIPHLLNLQVDSYVKFLQEGATERRHDEGLEGVFRSVFPIEDFNRTASLEFVSYEVGEPKYDQPECISKGLTYEAPIRIKVRLVVYDVDEDSGNRTIRDIKEQEIYFGTLPLMTEKGTFIINGTERVIVNQLQRSPGIIFEHDSGKTHSSRKVLYSCRIIPMRGSWLDFDFDHKDILYVRIDRRRKMPATILFKAMGMSKTDILDYFYKKEFYRLDPMGRLMWEVQKDMYRKDSAFVDIEDGKGGTIVKAGKPITKRAWRLISEAGLETIEVAPDTIEGMFLAEDIVNPATGEVLAEAADEITASLVENLREAGISRLPVLHTKGLETSSSLRDTLVLDKTPDMEAAQVEIYRRLRPSSPPTPEIAASFFDNLFRSADYYDLSPVGRYKLNQRLGIDQSVDLRTLTDDDILRAIRVLLHLKDSHGPADDIDHLGNRRVRPVGELVENQYRIGLVRMERAIKERMSLQEVSTLMPHDLINPKPVAAVLKEFFGTSQLSQFMDQTNALSEVTHKRRLSALGPGGLTRERAGFEVRDVHTSHYGRICPIETPEGPNIGLIVSLTTYAKVNDFGFIETPYRIIREGALTDEIKFLDASREQGEVVAQANAAVDADGKLADEYVTARVRGDVLMSHRDEVTLMDISPSQMVSISAALIPFLEHDDANRALMGSNMQRQAVPLLRSEKPIVGTGMEGDVARDSGACILAEGPGIVRYADATRIIVSYENGLYPDRGGVRAYDLQKYHKSNQNSCFGQRPTCHPGQIVKKGDVLADGPGIEDGELALGKNLVVAFMPWCGYNFEDSILISERVVKEDVFTSIHIEEFEVVARDTKLGPEEITRDIPNVGEDMLRNLDGSGIIRIGASVKPDDILVGKITPKGETQLTPEEKLLRAIFGDKARDVKNTSLKVPPGIEGTIIDVKVFNRRSGEKDERTRNIEDYETARIDKKEQDHVRALGDALRDRLADTLVGKQIAVTLPGKRKGEVLAEAGAPMTRELLDALPVKRLAGLFKSREVDEMVDTALEDYDRQVAFLKGIYDSKREKVTEGDDLPPGVIKMVKVHIAVKRKLNVGDKMAGRHGNKGVVSCILPEEDMPFFADGRPVDIVLNPLGVPSRMNIGQIMETHLGWGAKELGRQLAEMLDSGAAMATLRHEVKDVFRSATIAKLVDEMDDETFRKAVSKLRTGIVTKTPVFDGASEEDIWSWIERAGMDGDGKTVLYDGRTGDKFYNRVTTGVMYILKLHHLVDEKIHARSTGPYSLVTQQPLGGKAQFGGQRLGEMEVWALEAYGASYLLQEFLTVKSDDVTGRVKMYEKIVKGDNFLEAGLPESFNVLVKELMSLGLNVTLHQEEGKKRPKRVGFMSAL.

The protein belongs to the RNA polymerase beta chain family. The RNAP catalytic core consists of 2 alpha, 1 beta, 1 beta' and 1 omega subunit. When a sigma factor is associated with the core the holoenzyme is formed, which can initiate transcription.

The catalysed reaction is RNA(n) + a ribonucleoside 5'-triphosphate = RNA(n+1) + diphosphate. Its function is as follows. DNA-dependent RNA polymerase catalyzes the transcription of DNA into RNA using the four ribonucleoside triphosphates as substrates. This Nitratidesulfovibrio vulgaris (strain ATCC 29579 / DSM 644 / CCUG 34227 / NCIMB 8303 / VKM B-1760 / Hildenborough) (Desulfovibrio vulgaris) protein is DNA-directed RNA polymerase subunit beta.